The chain runs to 95 residues: Large ribosomal subunit protein bL25 (95 aa).

The protein belongs to the bacterial ribosomal protein bL25 family. In terms of assembly, part of the 50S ribosomal subunit; part of the 5S rRNA/L5/L18/L25 subcomplex. Contacts the 5S rRNA. Binds to the 5S rRNA independently of L5 and L18.

Its function is as follows. This is one of the proteins that binds to the 5S RNA in the ribosome where it forms part of the central protuberance. The sequence is that of Large ribosomal subunit protein bL25 from Shewanella piezotolerans (strain WP3 / JCM 13877).